A 474-amino-acid polypeptide reads, in one-letter code: Aromatic amino acid aminotransferase C56E4.03 (474 aa).

This sequence belongs to the class-I pyridoxal-phosphate-dependent aminotransferase family. The cofactor is pyridoxal 5'-phosphate.

It localises to the cytoplasm. The catalysed reaction is an aromatic L-alpha-amino acid + 2-oxoglutarate = an aromatic oxo-acid + L-glutamate. Functionally, has aromatic amino acid transaminase activity. The polypeptide is Aromatic amino acid aminotransferase C56E4.03 (Schizosaccharomyces pombe (strain 972 / ATCC 24843) (Fission yeast)).